The following is a 556-amino-acid chain: Glucose-6-phosphate isomerase (556 aa).

The active-site Proton donor is Glu-363. Residues His-394 and Lys-522 contribute to the active site.

It belongs to the GPI family.

Its subcellular location is the cytoplasm. The catalysed reaction is alpha-D-glucose 6-phosphate = beta-D-fructose 6-phosphate. It participates in carbohydrate biosynthesis; gluconeogenesis. It functions in the pathway carbohydrate degradation; glycolysis; D-glyceraldehyde 3-phosphate and glycerone phosphate from D-glucose: step 2/4. Its function is as follows. Catalyzes the reversible isomerization of glucose-6-phosphate to fructose-6-phosphate. The polypeptide is Glucose-6-phosphate isomerase (Frankia casuarinae (strain DSM 45818 / CECT 9043 / HFP020203 / CcI3)).